Reading from the N-terminus, the 87-residue chain is RNA-binding protein Hfq (87 aa).

The Sm domain maps to Asp-9–Val-68.

The protein belongs to the Hfq family. In terms of assembly, homohexamer.

Functionally, RNA chaperone that binds small regulatory RNA (sRNAs) and mRNAs to facilitate mRNA translational regulation in response to envelope stress, environmental stress and changes in metabolite concentrations. Also binds with high specificity to tRNAs. The polypeptide is RNA-binding protein Hfq (Teredinibacter turnerae (strain ATCC 39867 / T7901)).